The primary structure comprises 132 residues: Small ribosomal subunit protein uS8 (132 aa).

This sequence belongs to the universal ribosomal protein uS8 family. Part of the 30S ribosomal subunit. Contacts proteins S5 and S12.

Functionally, one of the primary rRNA binding proteins, it binds directly to 16S rRNA central domain where it helps coordinate assembly of the platform of the 30S subunit. In Rhodospirillum rubrum (strain ATCC 11170 / ATH 1.1.1 / DSM 467 / LMG 4362 / NCIMB 8255 / S1), this protein is Small ribosomal subunit protein uS8.